The sequence spans 479 residues: Odorant receptor coreceptor (479 aa).

Residues 1-43 (MHVQPTKYHGLVLDLMPNIRLMQGFGHFLFRYVSGPVLIRKLY) are Cytoplasmic-facing. A helical transmembrane segment spans residues 44–64 (SWWNLIMILLQYFAIMGNLVM). Residues 65-73 (NTGDVNELT) are Extracellular-facing. The helical transmembrane segment at 74–94 (ANTITTLFFTHSVTKFIYVAV) threads the bilayer. Residues 95 to 133 (NSEHFYRTLGIWNQPNSHSLFAESDARYHSIALAKMRKL) are Cytoplasmic-facing. Residues 134–154 (LVMVMVTTVLSVVAWITITFF) form a helical membrane-spanning segment. Over 155–187 (GDSVKNVFDKETNETYTVEIPRLPIKALYPWDA) the chain is Extracellular. Residue asparagine 167 is glycosylated (N-linked (GlcNAc...) asparagine). The chain crosses the membrane as a helical span at residues 188–208 (MSGVPYFFSFVYQAYFLLFSM). The Cytoplasmic portion of the chain corresponds to 209 to 344 (CQANLADVMF…VERHKHVVRL (136 aa)). The chain crosses the membrane as a helical span at residues 345–365 (VSAIGETYGAALLLHMLTSTI). Residues 366–383 (KLTLLAYQATKIDALNVY) lie on the Extracellular side of the membrane. A helical membrane pass occupies residues 384–404 (GLTVIGYLVYALAQVFLFCIF). Over 405 to 455 (GNRLIEESSSVMEAAYSCHWYDGSEEAKTFVQIVCQQCQKAMTISGAKFFT) the chain is Cytoplasmic. A helical transmembrane segment spans residues 456–476 (VSLDLFASVLGAVVTYFMVLV). At 477–479 (QLK) the chain is on the extracellular side.

It belongs to the insect chemoreceptor superfamily. Heteromeric odorant receptor channel (TC 1.A.69) family. Orco subfamily. Heterodimer with conventional odorant receptors (ORs). In terms of tissue distribution, expressed in female antenna, maxillary palp and proboscis. Not detected in male tissues.

It is found in the cell membrane. Functionally, odorant coreceptor which complexes with conventional odorant receptors (ORs) to form odorant-sensing units, providing sensitive and prolonged odorant signaling and calcium permeability. Orco is a universal and integral part of the functional odorant receptor, involved in the dendritic localization of other olfactory receptors. Required for detecting a host for blood feeding. Plays a key role in preferred attraction of females for humans over non-human hosts for blood feeding. In Aedes albopictus (Asian tiger mosquito), this protein is Odorant receptor coreceptor.